Consider the following 250-residue polypeptide: 3-deoxy-manno-octulosonate cytidylyltransferase (250 aa).

Belongs to the KdsB family.

It is found in the cytoplasm. The catalysed reaction is 3-deoxy-alpha-D-manno-oct-2-ulosonate + CTP = CMP-3-deoxy-beta-D-manno-octulosonate + diphosphate. It participates in nucleotide-sugar biosynthesis; CMP-3-deoxy-D-manno-octulosonate biosynthesis; CMP-3-deoxy-D-manno-octulosonate from 3-deoxy-D-manno-octulosonate and CTP: step 1/1. The protein operates within bacterial outer membrane biogenesis; lipopolysaccharide biosynthesis. Activates KDO (a required 8-carbon sugar) for incorporation into bacterial lipopolysaccharide in Gram-negative bacteria. In Herminiimonas arsenicoxydans, this protein is 3-deoxy-manno-octulosonate cytidylyltransferase.